The primary structure comprises 1091 residues: Neural cell adhesion molecule 1 (1091 aa).

An N-terminal signal peptide occupies residues 1–19 (MLPAAALPWTLFFLGAAAS). 5 consecutive Ig-like C2-type domains span residues 20 to 113 (LQVD…VNVK), 116 to 205 (QKLM…KDIQ), 212 to 301 (PSVR…ATIH), 308 to 403 (PKIT…LEVQ), and 406 to 495 (PKLQ…FILV). Over 20-711 (LQVDIVPSQG…STSPTSGLGT (692 aa)) the chain is Extracellular. 2 disulfides stabilise this stretch: Cys41–Cys96 and Cys139–Cys189. Heparin contacts are provided by residues 152-156 (KHKGR) and 161-165 (KKDVR). An N-linked (GlcNAc...) asparagine glycan is attached at Asn222. Cys235 and Cys287 are oxidised to a cystine. Asn315, Asn347, Asn423, Asn449, and Asn478 each carry an N-linked (GlcNAc...) asparagine glycan. An intrachain disulfide couples Cys329 to Cys385. A disulfide bridge connects residues Cys426 and Cys479. 2 consecutive Fibronectin type-III domains span residues 499–598 (TPSS…TQPV) and 600–696 (EPSA…SAQP). The helical transmembrane segment at 712–729 (AAIVGILIVIFVLLLVAV) threads the bilayer. The Cytoplasmic portion of the chain corresponds to 730–1091 (DVTCYFLNKC…ATEIRHLQQK (362 aa)). Disordered regions lie at residues 756 to 809 (GAKG…TEPE), 840 to 916 (ATAQ…NNLS), 937 to 1023 (ETSK…GTFK), and 1041 to 1091 (TPAS…LQQK). Positions 758–799 (KGKDMEEGKAAFSKDESKEPIVEVRTEEERTPNHDGGKHTEP) are enriched in basic and acidic residues. Residues 845–856 (SPTSETTTLTSS) show a composition bias toward low complexity. Polar residues-rich tracts occupy residues 904–916 (DTPS…NNLS) and 980–1012 (QPST…PSQN). Basic and acidic residues-rich tracts occupy residues 1013-1023 (EDFKMDEGTFK) and 1068-1091 (KTEK…LQQK).

Post-translationally, polysialylated by ST8SIA2 and ST8SIA4. Polysialylation modulates cell interactions by confering both attractive and repulsive properties that are highly regulated by ST8SIA2 and ST8SIA4. Polysialylation is formed on a-2,3-linked sialic acid of core glycans.

It is found in the cell membrane. In terms of biological role, this protein is a cell adhesion molecule involved in neuron-neuron adhesion, neurite fasciculation, outgrowth of neurites, etc. The protein is Neural cell adhesion molecule 1 of Gallus gallus (Chicken).